The sequence spans 644 residues: Low affinity sulfate transporter 3 (644 aa).

The span at 1–19 (MSSLGTEQFSERSQWVLNS) shows a compositional bias: polar residues. Residues 1–20 (MSSLGTEQFSERSQWVLNSP) form a disordered region. Transmembrane regions (helical) follow at residues 50–70 (AVSFLASLFPILSWIRTYSAT), 76–96 (LLSGLTLASLSIPQSIGYANL), 99–119 (LDPQYGLYTSVIPPVIYALMG), 124–144 (IAIGPVAVVSMLLSSLVPKVI), 156–176 (LVFTVTLFAGIFQTAFGVLRL), 179–199 (LVDFLSHAALVGFMAGAAIVI), 242–262 (PLNFVIGCSFLIFLLAARFIG), 268–288 (FFWLPAIAPLLSVILSTLIVF), 328–348 (IGLISAIIALTEAIAVGRSFA), 394–414 (CKTAVSNIVMAVTVLLCLELF), 418–438 (LYYTPMAILASIILSALPGLI), 455–475 (LACLGAFFGVLFVSIEIGLLI), and 518–538 (PGILVIRISSGSLCFANAGFV). The region spanning 511–635 (YPMAVTTPGI…LTVAEAVDAC (125 aa)) is the STAS domain.

The protein belongs to the SLC26A/SulP transporter (TC 2.A.53) family.

The protein localises to the membrane. Low-affinity H(+)/sulfate cotransporter which may be involved in the internal transport of sulfate between cellular or subcellular compartments within the plant. This Stylosanthes hamata (Caribbean stylo) protein is Low affinity sulfate transporter 3 (ST3).